A 412-amino-acid polypeptide reads, in one-letter code: MQFFNFLLFYPVFMSIYWIVGSIYFYFTREIRYSLNKKPDINVDELEGITFLLACYNESETIEDTLSNVLALKYEKKEIIIINDGSSDNTAELIYKIKENNDFIFVDLQENRGKANALNQGIKQASYDYVMCLDADTIVDQDAPYYMIENFKHDPKLGAVTGNPRIRNKSSILGKIQTIEYASLIGCIKRSQTLAGAVNTISGVFTLFKKSAVVDVGYWDTDMITEDIAVSWKLHLRGYRIKYEPLAMCWMLVPETLGGLWKQRVRWAQGGHEVLLRDFFSTMKTKRFPLYILMFEQIISILWVYIVLLYLGYLFITANFLDYTFMTYSFSIFLLSSFTMTFINVIQFTVALFIDSRYEKKNMAGLIFVSWYPTVYWIINAAVVLVAFPKALKRKKGGYATWSSPDRGNTQR.

The next 4 helical transmembrane spans lie at 6–26 (FLLF…IYFY), 298–318 (IISI…FITA), 332–352 (IFLL…TVAL), and 366–386 (LIFV…VVLV).

The protein belongs to the glycosyltransferase 2 family.

It localises to the cell membrane. Functionally, N-acetylglucosaminyltransferase that catalyzes the polymerization of single monomer units of UDP-N-acetylglucosamine to produce the linear homomer poly-beta-1,6-N-acetyl-D-glucosamine (PNAG, also referred to as PIA), a biofilm adhesin polysaccharide. Requires IcaD for full activity. The sequence is that of Poly-beta-1,6-N-acetyl-D-glucosamine synthase (icaA) from Staphylococcus aureus (strain NCTC 8325 / PS 47).